The primary structure comprises 441 residues: Enolase (441 aa).

Position 164 (Gln164) interacts with (2R)-2-phosphoglycerate. The Proton donor role is filled by Glu206. 3 residues coordinate Mg(2+): Asp243, Glu289, and Asp316. The (2R)-2-phosphoglycerate site is built by Lys341, Arg370, Ser371, and Lys392. Lys341 acts as the Proton acceptor in catalysis.

The protein belongs to the enolase family. The cofactor is Mg(2+).

Its subcellular location is the cytoplasm. It localises to the secreted. It is found in the cell surface. It catalyses the reaction (2R)-2-phosphoglycerate = phosphoenolpyruvate + H2O. The protein operates within carbohydrate degradation; glycolysis; pyruvate from D-glyceraldehyde 3-phosphate: step 4/5. Its function is as follows. Catalyzes the reversible conversion of 2-phosphoglycerate (2-PG) into phosphoenolpyruvate (PEP). It is essential for the degradation of carbohydrates via glycolysis. This chain is Enolase, found in Leuconostoc mesenteroides subsp. mesenteroides (strain ATCC 8293 / DSM 20343 / BCRC 11652 / CCM 1803 / JCM 6124 / NCDO 523 / NBRC 100496 / NCIMB 8023 / NCTC 12954 / NRRL B-1118 / 37Y).